The chain runs to 231 residues: Probable methylthioribulose-1-phosphate dehydratase (231 aa).

A substrate-binding site is contributed by cysteine 82. The Zn(2+) site is built by histidine 100 and histidine 102. The active-site Proton donor/acceptor is glutamate 123. Residue histidine 181 participates in Zn(2+) binding.

The protein belongs to the aldolase class II family. MtnB subfamily. The cofactor is Zn(2+).

It localises to the cytoplasm. It catalyses the reaction 5-(methylsulfanyl)-D-ribulose 1-phosphate = 5-methylsulfanyl-2,3-dioxopentyl phosphate + H2O. Its pathway is amino-acid biosynthesis; L-methionine biosynthesis via salvage pathway; L-methionine from S-methyl-5-thio-alpha-D-ribose 1-phosphate: step 2/6. Its function is as follows. Catalyzes the dehydration of methylthioribulose-1-phosphate (MTRu-1-P) into 2,3-diketo-5-methylthiopentyl-1-phosphate (DK-MTP-1-P). The protein is Probable methylthioribulose-1-phosphate dehydratase of Dictyostelium discoideum (Social amoeba).